The following is a 235-amino-acid chain: NADH-quinone oxidoreductase subunit C (235 aa).

The protein belongs to the complex I 30 kDa subunit family. In terms of assembly, NDH-1 is composed of 14 different subunits. Subunits NuoB, C, D, E, F, and G constitute the peripheral sector of the complex.

It is found in the cell membrane. It carries out the reaction a quinone + NADH + 5 H(+)(in) = a quinol + NAD(+) + 4 H(+)(out). NDH-1 shuttles electrons from NADH, via FMN and iron-sulfur (Fe-S) centers, to quinones in the respiratory chain. The immediate electron acceptor for the enzyme in this species is believed to be a menaquinone. Couples the redox reaction to proton translocation (for every two electrons transferred, four hydrogen ions are translocated across the cytoplasmic membrane), and thus conserves the redox energy in a proton gradient. This is NADH-quinone oxidoreductase subunit C from Mycobacterium avium (strain 104).